The chain runs to 360 residues: Histidinol-phosphate aminotransferase (360 aa).

Lysine 223 carries the N6-(pyridoxal phosphate)lysine modification.

The protein belongs to the class-II pyridoxal-phosphate-dependent aminotransferase family. Histidinol-phosphate aminotransferase subfamily. In terms of assembly, homodimer. It depends on pyridoxal 5'-phosphate as a cofactor.

The catalysed reaction is L-histidinol phosphate + 2-oxoglutarate = 3-(imidazol-4-yl)-2-oxopropyl phosphate + L-glutamate. It functions in the pathway amino-acid biosynthesis; L-histidine biosynthesis; L-histidine from 5-phospho-alpha-D-ribose 1-diphosphate: step 7/9. In Bacillus subtilis subsp. natto, this protein is Histidinol-phosphate aminotransferase.